Here is a 211-residue protein sequence, read N- to C-terminus: Methylthioribulose-1-phosphate dehydratase (211 aa).

Zn(2+) contacts are provided by histidine 101 and histidine 103.

This sequence belongs to the aldolase class II family. MtnB subfamily. Zn(2+) serves as cofactor.

The enzyme catalyses 5-(methylsulfanyl)-D-ribulose 1-phosphate = 5-methylsulfanyl-2,3-dioxopentyl phosphate + H2O. It participates in amino-acid biosynthesis; L-methionine biosynthesis via salvage pathway; L-methionine from S-methyl-5-thio-alpha-D-ribose 1-phosphate: step 2/6. Its function is as follows. Catalyzes the dehydration of methylthioribulose-1-phosphate (MTRu-1-P) into 2,3-diketo-5-methylthiopentyl-1-phosphate (DK-MTP-1-P). The chain is Methylthioribulose-1-phosphate dehydratase from Alcanivorax borkumensis (strain ATCC 700651 / DSM 11573 / NCIMB 13689 / SK2).